A 426-amino-acid chain; its full sequence is MLDIKLIRKAPEECETRLRKKDPSISLLPILNLDKEVRQLKTDSESLQSQKKLLSRQIHQTKARNEDASDMIGEVERISQELTRLEALLEEKDAALQNLLVRLPNYPDEDVPISPDKTGNRVIKSVGSPSTFSFPPKHHLELNQKLQILDFKLPGKTSGSGWPAYKNRGVLLEWALLTYLLQKQQSHGFQLWLPPLLVKREILFGSGQIPKFDGQYYRVEDGDQSLYLIPTAEVVLNGFHSQEIFNEKDLPIYYAACTPCFRREAGAAGAHERGLVRVHQFHKVEMFAFTTPEQADQAYEKMLSIVEEILTELKLPYRLSLLSTGDMSFTASKTIDAEVWLPGQKSYYEVSSISQCTDFQSRRSETRYKDSQGKMHFVHTLNGSGLATPRLFVAILENNQQEDGSVIIPEVLRPYLGNQEVLSAQE.

231-233 (TAE) contributes to the L-serine binding site. Residues 262–264 (RRE) and valine 278 contribute to the ATP site. Glutamate 285 lines the L-serine pocket. Residue 349 to 352 (EVSS) coordinates ATP. Serine 384 is an L-serine binding site.

It belongs to the class-II aminoacyl-tRNA synthetase family. Type-1 seryl-tRNA synthetase subfamily. As to quaternary structure, homodimer. The tRNA molecule binds across the dimer.

Its subcellular location is the cytoplasm. The catalysed reaction is tRNA(Ser) + L-serine + ATP = L-seryl-tRNA(Ser) + AMP + diphosphate + H(+). The enzyme catalyses tRNA(Sec) + L-serine + ATP = L-seryl-tRNA(Sec) + AMP + diphosphate + H(+). Its pathway is aminoacyl-tRNA biosynthesis; selenocysteinyl-tRNA(Sec) biosynthesis; L-seryl-tRNA(Sec) from L-serine and tRNA(Sec): step 1/1. Functionally, catalyzes the attachment of serine to tRNA(Ser). Is also able to aminoacylate tRNA(Sec) with serine, to form the misacylated tRNA L-seryl-tRNA(Sec), which will be further converted into selenocysteinyl-tRNA(Sec). This Chlamydia felis (strain Fe/C-56) (Chlamydophila felis) protein is Serine--tRNA ligase.